Here is a 420-residue protein sequence, read N- to C-terminus: Reticulon-4 receptor-like 2 (420 aa).

Positions 1 to 46 (MLPGLRRLLQAPASACLLLMLLALPLAAPSCPMLCTCYSSPPTVSC) are cleaved as a signal peptide. Disulfide bonds link C31-C37 and C35-C46. Residues 47–60 (QANNFSSVPLSLPP) enclose the LRRNT domain. N-linked (GlcNAc...) asparagine glycosylation is present at N50. LRR repeat units lie at residues 61–82 (STQRLFLQNNLIRTLRPGTFGS), 83–104 (NLLTLWLFSNNLSTIYPGTFRH), 107–129 (ALEELDLGDNRHLRSLEPDTFQG), 132–153 (RLQSLHLYRCQLSSLPGNIFRG), 156–177 (SLQYLYLQENSLLHLQDDLFAD), 180–201 (NLSHLFLHGNRLRLLTEHVFRG), 204–225 (SLDRLLLHGNRLQGVHRAAFRG), and 228–249 (RLTILYLFNNSLASLPGEALAD). N-linked (GlcNAc...) asparagine glycosylation occurs at N93. N236 carries an N-linked (GlcNAc...) asparagine glycan. The LRRCT domain maps to 261 to 312 (NPWACDCRARPLWAWFQRARVSSSDVTCATPPERQGRDLRALREADFQACPP). 2 cysteine pairs are disulfide-bonded: C265-C288 and C267-C310. The interval 308–399 (QACPPAAPTR…CQAPPDSRGP (92 aa)) is disordered. An important for interaction with MAG region spans residues 315-327 (PTRPGSRARGNSS). Positions 351–360 (LPAEDSRGRQ) are enriched in basic and acidic residues. C390 carries the GPI-anchor amidated cysteine lipid modification. A propeptide spans 391–420 (QAPPDSRGPALSAGLPSPLLCLLLLVPHHL) (removed in mature form).

This sequence belongs to the Nogo receptor family. In terms of assembly, interaction with MAG is controversial, and may be indirect. Does not interact with MAG, OMG and RTN4. Interacts with MAG. In terms of processing, undergoes zinc metalloproteinase-mediated ectodomain shedding in neuroblastoma cells; is released both as a full-length ectodomain and an N-terminal fragment containing the leucine-rich repeat (LRR) region of the protein. N-glycosylated. Highly expressed in brain and liver. Expressed at lower levels in kidney, mammary gland, placenta, skeletal muscle, spleen and thyroid.

The protein resides in the cell membrane. Its subcellular location is the membrane raft. It is found in the cell projection. It localises to the dendrite. The protein localises to the perikaryon. The protein resides in the axon. Cell surface receptor that plays a functionally redundant role in the inhibition of neurite outgrowth mediated by MAG. Plays a functionally redundant role in postnatal brain development. Contributes to normal axon migration across the brain midline and normal formation of the corpus callosum. Does not seem to play a significant role in regulating axon regeneration in the adult central nervous system. Protects motoneurons against apoptosis; protection against apoptosis is probably mediated by MAG. Like other family members, plays a role in restricting the number dendritic spines and the number of synapses that are formed during brain development. Signaling mediates activation of Rho and downstream reorganization of the actin cytoskeleton. The chain is Reticulon-4 receptor-like 2 from Homo sapiens (Human).